The primary structure comprises 310 residues: Olfactory receptor 5P54 (310 aa).

The Extracellular segment spans residues 1–25 (MNGGNHTSMTELFILGPTEDPTFCI). Residue Asn-5 is glycosylated (N-linked (GlcNAc...) asparagine). Residues 26–46 (AFFVIFLGVYMVTLVGNISII) traverse the membrane as a helical segment. Residues 47–54 (TLIRISSQ) lie on the Cytoplasmic side of the membrane. A helical membrane pass occupies residues 55-75 (LHTPVYLFLNHLAFVDILYST). Residues 76-99 (LVSVIMLMELLEHELALPVAACAA) lie on the Extracellular side of the membrane. An intrachain disulfide couples Cys-97 to Cys-189. A helical membrane pass occupies residues 100–120 (ELCITVLFGSSECFLLAAMAY). Over 121-133 (DCYVAICSPLLYS) the chain is Cytoplasmic. The helical transmembrane segment at 134–154 (TLMSSRVCFLLLGMSYVGGCM) threads the bilayer. The Extracellular portion of the chain corresponds to 155 to 196 (NGWIFTGCLLNLSFYGPYQIDHFFCDFSPLLKLSCSDVSIIG). N-linked (GlcNAc...) asparagine glycosylation is present at Asn-165. A helical transmembrane segment spans residues 197 to 217 (IIPSISSGSIIVVTVLVIAVF). Residues 218–237 (YICILMTILKMHSTDGCHKA) lie on the Cytoplasmic side of the membrane. Residues 238–258 (FSTCNSYLTAVTLYYGTITFI) form a helical membrane-spanning segment. The Extracellular segment spans residues 259–271 (YVMPKSNYSTEKN). Asn-265 is a glycosylation site (N-linked (GlcNAc...) asparagine). Residues 272–292 (KVLSEFYTVVIPMLNHLIYSL) traverse the membrane as a helical segment. At 293 to 310 (KNRDVKDALRKAIVRVYT) the chain is on the cytoplasmic side.

It belongs to the G-protein coupled receptor 1 family.

The protein resides in the cell membrane. Its function is as follows. Potential odorant receptor. This is Olfactory receptor 5P54 from Mus musculus (Mouse).